A 316-amino-acid chain; its full sequence is Ribosomal RNA small subunit methyltransferase H (316 aa).

S-adenosyl-L-methionine-binding positions include 32–34 (AGH), D52, F79, D100, and Q107.

This sequence belongs to the methyltransferase superfamily. RsmH family.

It is found in the cytoplasm. It carries out the reaction cytidine(1402) in 16S rRNA + S-adenosyl-L-methionine = N(4)-methylcytidine(1402) in 16S rRNA + S-adenosyl-L-homocysteine + H(+). Specifically methylates the N4 position of cytidine in position 1402 (C1402) of 16S rRNA. In Lysinibacillus sphaericus (strain C3-41), this protein is Ribosomal RNA small subunit methyltransferase H.